Consider the following 207-residue polypeptide: uncharacterized protein (207 aa).

This is an uncharacterized protein from Haemophilus influenzae (strain ATCC 51907 / DSM 11121 / KW20 / Rd).